A 62-amino-acid chain; its full sequence is DNA-directed RNA polymerase subunit Rpo10 (62 aa).

C6, C9, C43, and C44 together coordinate Zn(2+).

It belongs to the archaeal Rpo10/eukaryotic RPB10 RNA polymerase subunit family. As to quaternary structure, part of the RNA polymerase complex. Zn(2+) is required as a cofactor.

The protein resides in the cytoplasm. The enzyme catalyses RNA(n) + a ribonucleoside 5'-triphosphate = RNA(n+1) + diphosphate. Its function is as follows. DNA-dependent RNA polymerase (RNAP) catalyzes the transcription of DNA into RNA using the four ribonucleoside triphosphates as substrates. The sequence is that of DNA-directed RNA polymerase subunit Rpo10 from Methanosphaerula palustris (strain ATCC BAA-1556 / DSM 19958 / E1-9c).